Here is a 215-residue protein sequence, read N- to C-terminus: MQFFIDSADVGEIKKALALGLCDGVTTNPSLVAKTGRSFDDVLKEIVALAPGPISAEVTATDAEGMLREARAYAKYGDQVVIKIPLIVEGLRAVKVLSQEGVKTNVTLCFSAVQALLAAKAGATYVSPFVGRLDDISQDGMQLIADILEIYRNYDFDTKVLVASVRHPVHVLEAARLGAHVATIPFGVIEQLAKHPLTDAGLKKFLADWEKVPKR.

K83 acts as the Schiff-base intermediate with substrate in catalysis.

It belongs to the transaldolase family. Type 3B subfamily.

It localises to the cytoplasm. It carries out the reaction D-sedoheptulose 7-phosphate + D-glyceraldehyde 3-phosphate = D-erythrose 4-phosphate + beta-D-fructose 6-phosphate. It functions in the pathway carbohydrate degradation; pentose phosphate pathway; D-glyceraldehyde 3-phosphate and beta-D-fructose 6-phosphate from D-ribose 5-phosphate and D-xylulose 5-phosphate (non-oxidative stage): step 2/3. In terms of biological role, transaldolase is important for the balance of metabolites in the pentose-phosphate pathway. This chain is Probable transaldolase, found in Anaeromyxobacter sp. (strain Fw109-5).